Consider the following 61-residue polypeptide: UPF0434 protein Pput_3813 (61 aa).

It belongs to the UPF0434 family.

The sequence is that of UPF0434 protein Pput_3813 from Pseudomonas putida (strain ATCC 700007 / DSM 6899 / JCM 31910 / BCRC 17059 / LMG 24140 / F1).